The primary structure comprises 414 residues: Peptidoglycan beta-N-acetylmuramidase NamZ (414 aa).

A signal peptide spans M1–A23.

The protein belongs to the glycoside hydrolase 171 family. As to quaternary structure, homodimer in solution.

It is found in the secreted. It catalyses the reaction Hydrolysis of terminal, non-reducing N-acetylmuramic residues.. Catalyzes the exo-lytic cleavage of beta-1,4-N-acetylmuramate (beta-1,4-MurNAc) from the non-reducing ends of peptidoglycan chains. Specifically hydrolyzes the natural, peptidoglycan-derived disaccharide MurNAc-GlcNAc and the artificial substrate para-nitrophenyl beta-N-acetylmuramic acid (pNP-MurNAc). Requires a MurNAc entity at the non-reducing end, and cannot cleave GlcNAc-MurNAc. Probably plays a role in cell wall turnover and recycling. This chain is Peptidoglycan beta-N-acetylmuramidase NamZ, found in Bacillus subtilis (strain 168).